Here is a 1890-residue protein sequence, read N- to C-terminus: Proteasome-associated protein ECM29 homolog (1890 aa).

HEAT repeat units follow at residues 6 to 29 (NAEI…EKLE), 30 to 67 (AAVG…RLSS), 130 to 167 (DKLF…ICAN), 226 to 263 (FSDL…MLDF), 294 to 330 (RVRQ…TNTN), 334 to 354 (KVLA…ELVS), 355 to 395 (KVSK…SFPQ), 459 to 496 (GQQH…EYYA), 498 to 523 (ARYL…LYGT), 524 to 561 (SKKD…EQRR), 565 to 602 (PSFQ…SLEV), 685 to 722 (AKQL…FGLS), 776 to 813 (PQFV…AVEI), 843 to 882 (STKL…GDGE), 938 to 975 (DDFD…HCSQ), 980 to 1018 (LAKK…ISDS), 1118 to 1155 (PYLG…DSKE), and 1159 to 1196 (RYYW…RPNG). Ser-1213 is modified (phosphoserine). 8 HEAT repeats span residues 1271 to 1309 (AVAS…SSGS), 1313 to 1350 (PHLA…AQEA), 1378 to 1415 (SVLE…IRLG), 1416 to 1457 (KEMT…LAKE), 1497 to 1534 (DYMD…DVSP), 1541 to 1578 (LNLN…RLSS), 1583 to 1620 (PDRL…GLDR), and 1623 to 1660 (QICS…QLEA). Residues 1680 to 1702 (RKESDDEDEPNTSQELSADERNK) form a disordered region. At Ser-1683 the chain carries Phosphoserine. Thr-1691 carries the post-translational modification Phosphothreonine. Ser-1692 carries the post-translational modification Phosphoserine. HEAT repeat units follow at residues 1751 to 1788 (PVQV…EKKI) and 1826 to 1863 (KEAL…NLEK).

Associated with the proteasome.

It is found in the cytoplasm. This chain is Proteasome-associated protein ECM29 homolog, found in Drosophila melanogaster (Fruit fly).